The following is a 710-amino-acid chain: Choline transporter-like protein 2 (710 aa).

Residues 1-34 (MEDDGKSPPDSAYGEPKKYDPNFKGPIQNRGCTD) are Cytoplasmic-facing. A helical membrane pass occupies residues 35–55 (ILCCILIVLGIIAYVAVGIVA). Residues 56–236 (WTYGDPRKVI…KIFEDYTVSW (181 aa)) lie on the Extracellular side of the membrane. Residues Asn147, Asn190, and Asn204 are each glycosylated (N-linked (GlcNAc...) asparagine). The chain crosses the membrane as a helical span at residues 237 to 257 (YWIIIGLIIAMVISLIFVVLL). Over 258 to 260 (RFL) the chain is Cytoplasmic. Residues 261-281 (AGIMVWVMIVLVIAVMGYGIF) traverse the membrane as a helical segment. Residues 282-319 (HCYMEYARLKGQSGSDVTLKDIGFQTDIRVYLHLRQTW) are Extracellular-facing. Residues 320-340 (LAFMIILCILEVIVILLLIFL) form a helical membrane-spanning segment. Topologically, residues 341–368 (RKRIMIAIALIKEASRAVGFVMSSLVFP) are cytoplasmic. A helical transmembrane segment spans residues 369–389 (LFTFLLVCLCIAYWAITAVFL). Topologically, residues 390 to 458 (STSNEAVYKV…FQIYNAFMFL (69 aa)) are extracellular. Residues Asn401, Asn418, and Asn421 are each glycosylated (N-linked (GlcNAc...) asparagine). A helical membrane pass occupies residues 459–481 (WLANFVIALGQVTLAGAFASYYW). Residues 482–508 (AFKKPDDMPAFPIFSSLGRALRYHTGS) are Cytoplasmic-facing. Residues 509 to 529 (LAFGSLILAIVQMIRILLEYL) traverse the membrane as a helical segment. At 530–567 (DHKLKGADNKCARFLLCCLKCCFWCLEKFIKFLNRNAY) the chain is on the extracellular side. A helical transmembrane segment spans residues 568-588 (IMIAIYGTNFCTSARNAFFLL). The Cytoplasmic portion of the chain corresponds to 589 to 603 (MRNIIRVAVLDKVTD). Residues 604 to 624 (FLLFLGKLLVVGCVGILAFFF) traverse the membrane as a helical segment. Residues 625-642 (FSRRIQIVQDTAPTLNYY) lie on the Extracellular side of the membrane. A helical membrane pass occupies residues 643-663 (WVPILTVILGSYLIAHGFFSV). The Cytoplasmic portion of the chain corresponds to 664 to 710 (YGMCVDTLFLCFLEDLERNDGSTERPYFMSGSLQKLLNKSNQTKPDK).

Belongs to the CTL (choline transporter-like) family.

It is found in the cell membrane. The protein localises to the mitochondrion outer membrane. It carries out the reaction choline(out) + n H(+)(in) = choline(in) + n H(+)(out). The enzyme catalyses ethanolamine(out) + n H(+)(in) = ethanolamine(in) + n H(+)(out). Choline/H+ antiporter, mainly in mitochodria. Also acts as a low-affinity ethanolamine/H+ antiporter, regulating the supply of extracellular ethanolamine (Etn) for the CDP-Etn pathway, redistribute intracellular Etn and balance the CDP-Cho and CDP-Etn arms of the Kennedy pathway. In Xenopus laevis (African clawed frog), this protein is Choline transporter-like protein 2 (slc44a2).